The following is a 240-amino-acid chain: Ribonuclease 3 (240 aa).

Residues 9-141 form the RNase III domain; that stretch reads VEELQKRLGV…LLAALYLDQG (133 aa). Glu54 is a Mg(2+) binding site. Residue Asp58 is part of the active site. The Mg(2+) site is built by Asp127 and Glu130. The active site involves Glu130. The DRBM domain occupies 168 to 237; the sequence is DYKTALQEIV…ARKAYEKLVA (70 aa).

The protein belongs to the ribonuclease III family. Homodimer. Mg(2+) is required as a cofactor.

Its subcellular location is the cytoplasm. The enzyme catalyses Endonucleolytic cleavage to 5'-phosphomonoester.. In terms of biological role, digests double-stranded RNA. Involved in the processing of primary rRNA transcript to yield the immediate precursors to the large and small rRNAs (23S and 16S). Processes some mRNAs, and tRNAs when they are encoded in the rRNA operon. Processes pre-crRNA and tracrRNA of type II CRISPR loci if present in the organism. This is Ribonuclease 3 from Thermotoga neapolitana (strain ATCC 49049 / DSM 4359 / NBRC 107923 / NS-E).